A 260-amino-acid polypeptide reads, in one-letter code: 5-oxoprolinase subunit A (260 aa).

Belongs to the LamB/PxpA family. In terms of assembly, forms a complex composed of PxpA, PxpB and PxpC.

It carries out the reaction 5-oxo-L-proline + ATP + 2 H2O = L-glutamate + ADP + phosphate + H(+). In terms of biological role, catalyzes the cleavage of 5-oxoproline to form L-glutamate coupled to the hydrolysis of ATP to ADP and inorganic phosphate. The polypeptide is 5-oxoprolinase subunit A (Methylococcus capsulatus (strain ATCC 33009 / NCIMB 11132 / Bath)).